The primary structure comprises 319 residues: Mitochondrial fission regulator 1-like-A (319 aa).

The segment at 1-37 (MASLGAAAEPERNLFGKDEAEAYESPEGRRSGRKKRT) is disordered. Basic and acidic residues predominate over residues 9-30 (EPERNLFGKDEAEAYESPEGRR).

It belongs to the MTFR1 family.

It is found in the mitochondrion outer membrane. Mitochondrial protein required for adaptation of miochondrial dynamics to metabolic changes. Regulates mitochondrial morphology at steady state and mediates AMPK-dependent stress-induced mitochondrial fragmentation via the control of OPA1 levels. This chain is Mitochondrial fission regulator 1-like-A (mtfr1l-a), found in Xenopus laevis (African clawed frog).